A 514-amino-acid chain; its full sequence is MNIQEEIKKRRTFAIISHPDAGKTTITEQLLYFGGEIREAGTVKGKKTGTFAKSDWMDIEKQRGISVTSSVMQFDYDGKRVNILDTPGHEDFSEDTYRTLMAVDAAVMVVDSAKGIEAQTKKLFEVVKHRGIPVFTFMNKLDRDGREPLDLLQELEEILGIASYPMNWPIGMGKAFEGLYDLYNQRLELYKGDERFASLEDGDKLFGSNPFYEQVKDDIELLNEAGNEFSEEAILAGELTPVFFGSALTNFGVQTFLEIFLKFAPEPHGHKKTDGEIVDPYDKDFSGFVFKIQANMDPRHRDRIAFVRIVSGEFERGMSVNLPRTGKGAKLSNVTQFMAESRENVTNAVSGDIIGVYDTGTYQVGDTLTVGKNKFEFEPLPTFTPEIFMKVSAKNVMKQKSFHKGIEQLVQEGAVQLYKNYQTGEYMLGAVGQLQFEVFKHRMEGEYNAEVVMTPMGKKTVRWIKPEDLDERMSSSRNILAKDRFDQPVFLFENDFALRWFADKYPDVELEEKM.

Positions Lys-8–His-268 constitute a tr-type G domain. Residues Ser-17–Thr-24, Asp-85–His-89, and Asn-139–Asp-142 each bind GTP.

This sequence belongs to the TRAFAC class translation factor GTPase superfamily. Classic translation factor GTPase family. PrfC subfamily.

It is found in the cytoplasm. Increases the formation of ribosomal termination complexes and stimulates activities of RF-1 and RF-2. It binds guanine nucleotides and has strong preference for UGA stop codons. It may interact directly with the ribosome. The stimulation of RF-1 and RF-2 is significantly reduced by GTP and GDP, but not by GMP. The chain is Peptide chain release factor 3 from Streptococcus pneumoniae (strain 70585).